We begin with the raw amino-acid sequence, 559 residues long: 2-isopropylmalate synthase (559 aa).

A Pyruvate carboxyltransferase domain is found at 30–304; the sequence is PLWAAVDLRD…DPGIDFSRMK (275 aa). Residues aspartate 39, histidine 243, histidine 245, and asparagine 279 each contribute to the Mg(2+) site. The interval 436-559 is regulatory domain; the sequence is VPMGWVLRSY…ETSEQLIANS (124 aa).

It belongs to the alpha-IPM synthase/homocitrate synthase family. LeuA type 2 subfamily. In terms of assembly, homodimer. The cofactor is Mg(2+).

The protein resides in the cytoplasm. It catalyses the reaction 3-methyl-2-oxobutanoate + acetyl-CoA + H2O = (2S)-2-isopropylmalate + CoA + H(+). It functions in the pathway amino-acid biosynthesis; L-leucine biosynthesis; L-leucine from 3-methyl-2-oxobutanoate: step 1/4. Catalyzes the condensation of the acetyl group of acetyl-CoA with 3-methyl-2-oxobutanoate (2-ketoisovalerate) to form 3-carboxy-3-hydroxy-4-methylpentanoate (2-isopropylmalate). This chain is 2-isopropylmalate synthase, found in Alcanivorax borkumensis (strain ATCC 700651 / DSM 11573 / NCIMB 13689 / SK2).